We begin with the raw amino-acid sequence, 351 residues long: Pinopsin (351 aa).

At 1-30 (MSSNSSQAPPNGTPGPFDGPQWPYQAPQST) the chain is on the extracellular side. Asn-4 carries an N-linked (GlcNAc...) asparagine glycan. The helical transmembrane segment at 31 to 55 (YVGVAVLMGTVVACASVVNGLVIVV) threads the bilayer. Topologically, residues 56–67 (SICYKKLRSPLN) are cytoplasmic. Residues 68-92 (YILVNLAVADLLVTLCGSSVSLSNN) form a helical membrane-spanning segment. The Extracellular segment spans residues 93–107 (INGFFVFGRRMCELE). Cys-104 and Cys-181 form a disulfide bridge. The helical transmembrane segment at 108 to 127 (GFMVSLTGIVGLWSLAILAL) threads the bilayer. Residues 128–146 (ERYVVVCKPLGDFQFQRRH) are Cytoplasmic-facing. A helical membrane pass occupies residues 147–170 (AVSGCAFTWGWALLWSAPPLLGWS). Residues 171-194 (SYVPEGLRTSCGPNWYTGGSNNNS) are Extracellular-facing. Asn-192 carries an N-linked (GlcNAc...) asparagine glycan. A helical transmembrane segment spans residues 195-222 (YILSLFVTCFVLPLSLILFSYTNLLLTL). The Cytoplasmic segment spans residues 223-244 (RAAAAQQKEADTTQRAEREVTR). The helical transmembrane segment at 245–268 (MVIVMVMAFLLCWLPYSTFALVVA) threads the bilayer. The Extracellular segment spans residues 269-276 (THKGIIIQ). Residues 277–301 (PVLASLPSYFSKTATVYNPIIYVFM) traverse the membrane as a helical segment. Lys-288 carries the N6-(retinylidene)lysine modification. The Cytoplasmic portion of the chain corresponds to 302 to 351 (NKQFQSCLLEMLCCGYQPQRTGKASPGTPGPHADVTAAGLRNKVMPAHPV). 2 S-palmitoyl cysteine lipidation sites follow: Cys-314 and Cys-315.

It belongs to the G-protein coupled receptor 1 family. Opsin subfamily. In terms of processing, phosphorylated on some or all of the serine and threonine residues present in the C-terminal region. As to expression, pineal gland.

Its subcellular location is the membrane. Functionally, produces a slow and prolonged phototransduction response consistent with the non-visual function of pineal photoreception. In Gallus gallus (Chicken), this protein is Pinopsin.